The following is a 154-amino-acid chain: 6,7-dimethyl-8-ribityllumazine synthase (154 aa).

Residues phenylalanine 26, 60–62 (ALE), and 84–86 (CII) each bind 5-amino-6-(D-ribitylamino)uracil. A (2S)-2-hydroxy-3-oxobutyl phosphate-binding site is contributed by 89-90 (QT). The active-site Proton donor is the histidine 92. Asparagine 117 serves as a coordination point for 5-amino-6-(D-ribitylamino)uracil. Arginine 131 contacts (2S)-2-hydroxy-3-oxobutyl phosphate.

The protein belongs to the DMRL synthase family.

The enzyme catalyses (2S)-2-hydroxy-3-oxobutyl phosphate + 5-amino-6-(D-ribitylamino)uracil = 6,7-dimethyl-8-(1-D-ribityl)lumazine + phosphate + 2 H2O + H(+). It participates in cofactor biosynthesis; riboflavin biosynthesis; riboflavin from 2-hydroxy-3-oxobutyl phosphate and 5-amino-6-(D-ribitylamino)uracil: step 1/2. Functionally, catalyzes the formation of 6,7-dimethyl-8-ribityllumazine by condensation of 5-amino-6-(D-ribitylamino)uracil with 3,4-dihydroxy-2-butanone 4-phosphate. This is the penultimate step in the biosynthesis of riboflavin. The polypeptide is 6,7-dimethyl-8-ribityllumazine synthase (Verminephrobacter eiseniae (strain EF01-2)).